We begin with the raw amino-acid sequence, 60 residues long: Cytotoxin 4 (60 aa).

4 disulfides stabilise this stretch: Cys3–Cys21, Cys14–Cys38, Cys42–Cys53, and Cys54–Cys59.

The protein belongs to the three-finger toxin family. Short-chain subfamily. Type IA cytotoxin sub-subfamily. Monomer in solution; Homodimer and oligomer in the presence of negatively charged lipids forming a pore with a size ranging between 20 and 30 Angstroms. In terms of tissue distribution, expressed by the venom gland.

Its subcellular location is the secreted. The protein resides in the target cell membrane. Functionally, shows cytolytic activity on many different cells by forming pore in lipid membranes. In vivo, increases heart rate or kills the animal by cardiac arrest. In addition, it binds to heparin with high affinity, interacts with Kv channel-interacting protein 1 (KCNIP1) in a calcium-independent manner, and binds to integrin alpha-V/beta-3 (ITGAV/ITGB3) with moderate affinity. The chain is Cytotoxin 4 from Naja annulifera (Banded Egyptian cobra).